We begin with the raw amino-acid sequence, 149 residues long: uncharacterized protein (149 aa).

Residues 34–94 (HTPCLPKVPR…NPIGSQRIHS (61 aa)) are disordered. Basic and acidic residues predominate over residues 56–66 (QSPHRQGDRRR).

The protein localises to the mitochondrion. This is an uncharacterized protein from Arabidopsis thaliana (Mouse-ear cress).